Consider the following 378-residue polypeptide: Opsin Rh4 (378 aa).

Residues M1–M53 are Extracellular-facing. The N-linked (GlcNAc...) asparagine glycan is linked to N6. A helical membrane pass occupies residues H54–I78. Residues F79–N90 lie on the Cytoplasmic side of the membrane. Residues M91–I111 form a helical membrane-spanning segment. Over Y112 to Q127 the chain is Extracellular. C126 and C203 are disulfide-bonded. The chain crosses the membrane as a helical span at residues I128–G148. Residues Y149–K167 are Cytoplasmic-facing. Residues A168–D192 form a helical membrane-spanning segment. Over R193–L216 the chain is Extracellular. A helical transmembrane segment spans residues F217–V244. Residues F245–K280 are Cytoplasmic-facing. Residues A281–A304 traverse the membrane as a helical segment. Residues F305–T312 are Extracellular-facing. A helical transmembrane segment spans residues P313–S337. K324 carries the post-translational modification N6-(retinylidene)lysine. The Cytoplasmic segment spans residues H338–A378.

This sequence belongs to the G-protein coupled receptor 1 family. Opsin subfamily. In terms of processing, phosphorylated on some or all of the serine and threonine residues present in the C-terminal region.

Its subcellular location is the membrane. Its function is as follows. Visual pigments are the light-absorbing molecules that mediate vision. They consist of an apoprotein, opsin, covalently linked to cis-retinal. This is Opsin Rh4 (Rh4) from Drosophila melanogaster (Fruit fly).